Here is a 59-residue protein sequence, read N- to C-terminus: MNMFVIAAKSEGKYLYGYHPHIYSNLKQAENALKTMRKNGKLTERDKVYGLDGLMLVDL.

The protein is SPbeta prophage-derived uncharacterized protein YosB (yosB) of Bacillus subtilis (strain 168).